The following is a 229-amino-acid chain: Probable U3 small nucleolar RNA-associated protein 11 (229 aa).

Disordered stretches follow at residues 1-23 (MSSLRNAIQRRAHKERAQPESRK) and 199-229 (KKPGRKRKLREDEIENQTSRPVYKWRAQRKR).

The protein belongs to the UTP11 family. In terms of assembly, component of the ribosomal small subunit (SSU) processome.

The protein localises to the nucleus. It localises to the nucleolus. In terms of biological role, involved in nucleolar processing of pre-18S ribosomal RNA. The chain is Probable U3 small nucleolar RNA-associated protein 11 from Oryza sativa subsp. japonica (Rice).